A 194-amino-acid chain; its full sequence is Holliday junction branch migration complex subunit RuvA (194 aa).

Residues 1 to 64 are domain I; that stretch reads MISRLTGKLV…EDAHLLFGFA (64 aa). Positions 65 to 143 are domain II; the sequence is TAEERKTFRQ…AHTVTDGLFA (79 aa). Positions 144-147 are flexible linker; that stretch reads ASPA. The tract at residues 147–194 is domain III; that stretch reads AADETEDIVSTLLALGYNEREAKAAVKGVPKGTDVGEGVRLALKNLLK.

Belongs to the RuvA family. In terms of assembly, homotetramer. Forms an RuvA(8)-RuvB(12)-Holliday junction (HJ) complex. HJ DNA is sandwiched between 2 RuvA tetramers; dsDNA enters through RuvA and exits via RuvB. An RuvB hexamer assembles on each DNA strand where it exits the tetramer. Each RuvB hexamer is contacted by two RuvA subunits (via domain III) on 2 adjacent RuvB subunits; this complex drives branch migration. In the full resolvosome a probable DNA-RuvA(4)-RuvB(12)-RuvC(2) complex forms which resolves the HJ.

The protein localises to the cytoplasm. The RuvA-RuvB-RuvC complex processes Holliday junction (HJ) DNA during genetic recombination and DNA repair, while the RuvA-RuvB complex plays an important role in the rescue of blocked DNA replication forks via replication fork reversal (RFR). RuvA specifically binds to HJ cruciform DNA, conferring on it an open structure. The RuvB hexamer acts as an ATP-dependent pump, pulling dsDNA into and through the RuvAB complex. HJ branch migration allows RuvC to scan DNA until it finds its consensus sequence, where it cleaves and resolves the cruciform DNA. The sequence is that of Holliday junction branch migration complex subunit RuvA from Neisseria gonorrhoeae (strain ATCC 700825 / FA 1090).